Reading from the N-terminus, the 427-residue chain is ATP-dependent RNA helicase DDX39A (427 aa).

A compositionally biased stretch (acidic residues) spans 1–19 (MAEQDVENDLLDYDEEEEP). The disordered stretch occupies residues 1-34 (MAEQDVENDLLDYDEEEEPQAPQESTPAPPKKDI). Ala2 carries the N-acetylalanine modification. Lys31 participates in a covalent cross-link: Glycyl lysine isopeptide (Lys-Gly) (interchain with G-Cter in SUMO2). Lys35 carries the N6-acetyllysine; alternate modification. A Glycyl lysine isopeptide (Lys-Gly) (interchain with G-Cter in SUMO2); alternate cross-link involves residue Lys35. A Phosphoserine modification is found at Ser37. Residues 44 to 72 (SGFRDFLLKPELLRAIVDCGFEHPSEVQH) carry the Q motif motif. In terms of domain architecture, Helicase ATP-binding spans 75–248 (IPQAILGMDV…RKFMQDPMEV (174 aa)). Position 88–95 (88–95 (AKSGMGKT)) interacts with ATP. Glycyl lysine isopeptide (Lys-Gly) (interchain with G-Cter in SUMO2) cross-links involve residues Lys154 and Lys162. Thr171 is modified (phosphothreonine). Residues 195 to 198 (DECD) carry the DECD box motif. Residues Lys240 and Lys255 each participate in a glycyl lysine isopeptide (Lys-Gly) (interchain with G-Cter in SUMO2) cross-link. The Helicase C-terminal domain maps to 260–421 (GLQQYYVKLK…ELPEEIDIST (162 aa)). At Ser426 the chain carries Phosphoserine.

Belongs to the DEAD box helicase family. DECD subfamily. In terms of assembly, binds ALYREF/THOC4 and DDX39B/BAT1. Interacts with the apo-AREX complex component SARNP. Interacts with MX1. Interacts with MCM3AP isoform GANP. Interacts with ECD. Interacts with PHAX; this interaction stimulates PHAX RNA binding activity. As to quaternary structure, (Microbial infection) Interacts with human cytomegalovirus/HHV-5 protein UL69. SUMOylated by RANBP2; SUMOylation modification affects its ability to bind RNA. Detected in testis, and at lower levels in brain, kidney, lung, thymus, spleen and salivary gland.

It is found in the nucleus. It localises to the cytoplasm. The enzyme catalyses ATP + H2O = ADP + phosphate + H(+). Helicase that plays an essential role in mRNA export and is involved in multiple steps in RNA metabolism including alternative splicing. Regulates nuclear mRNA export to the cytoplasm through association with ECD. Also involved in spliceosomal uridine-rich small nuclear RNA (U snRNA) export by stimulating the RNA binding of adapter PHAX. Plays a role in the negative regulation of type I IFN production by increasing the nuclear retention of antiviral transcripts and thus reducing their protein expression. Independently of the interferon pathway, plays an antiviral role against alphaviruses by binding to a 5' conserved sequence element in the viral genomic RNA. The sequence is that of ATP-dependent RNA helicase DDX39A (DDX39A) from Homo sapiens (Human).